Here is a 253-residue protein sequence, read N- to C-terminus: Imidazole glycerol phosphate synthase subunit HisF (253 aa).

Catalysis depends on residues Asp11 and Asp130.

It belongs to the HisA/HisF family. In terms of assembly, heterodimer of HisH and HisF.

The protein resides in the cytoplasm. The enzyme catalyses 5-[(5-phospho-1-deoxy-D-ribulos-1-ylimino)methylamino]-1-(5-phospho-beta-D-ribosyl)imidazole-4-carboxamide + L-glutamine = D-erythro-1-(imidazol-4-yl)glycerol 3-phosphate + 5-amino-1-(5-phospho-beta-D-ribosyl)imidazole-4-carboxamide + L-glutamate + H(+). It functions in the pathway amino-acid biosynthesis; L-histidine biosynthesis; L-histidine from 5-phospho-alpha-D-ribose 1-diphosphate: step 5/9. Its function is as follows. IGPS catalyzes the conversion of PRFAR and glutamine to IGP, AICAR and glutamate. The HisF subunit catalyzes the cyclization activity that produces IGP and AICAR from PRFAR using the ammonia provided by the HisH subunit. This is Imidazole glycerol phosphate synthase subunit HisF from Clostridium botulinum (strain Kyoto / Type A2).